Here is a 181-residue protein sequence, read N- to C-terminus: LEM domain-containing protein 1 (181 aa).

The region spanning 1–45 (MVDVKCLSDCKLQNQLEKLGFSPGPILPSTRKLYEKKLVQLLVSP) is the LEM domain. The chain crosses the membrane as a helical; Signal-anchor for type II membrane protein span at residues 152 to 172 (FPVGLKLAVLGIFIIVVFVYL).

Testis-specific. Isoform 6 is detected in 17 of 18 colon cancer tissues examined.

The protein resides in the membrane. The protein is LEM domain-containing protein 1 (LEMD1) of Homo sapiens (Human).